The primary structure comprises 297 residues: Ribosomal RNA small subunit methyltransferase H (297 aa).

S-adenosyl-L-methionine is bound by residues 37–39, Glu-56, Phe-87, Asp-102, and His-109; that span reads GGH.

It belongs to the methyltransferase superfamily. RsmH family.

Its subcellular location is the cytoplasm. It carries out the reaction cytidine(1402) in 16S rRNA + S-adenosyl-L-methionine = N(4)-methylcytidine(1402) in 16S rRNA + S-adenosyl-L-homocysteine + H(+). Functionally, specifically methylates the N4 position of cytidine in position 1402 (C1402) of 16S rRNA. This Borrelia duttonii (strain Ly) protein is Ribosomal RNA small subunit methyltransferase H.